Here is a 335-residue protein sequence, read N- to C-terminus: Thioredoxin reductase (335 aa).

FAD is bound by residues 22-25 (SGPA), 44-51 (EGTSFGGA), Asn60, and Val93. Cys145 and Cys148 are joined by a disulfide. NADP(+)-binding residues include Ser166, His185, Arg191, Ile248, and Tyr268. FAD is bound by residues Asp288 and 295-298 (RQAV). An NADP(+)-binding site is contributed by Arg295.

Belongs to the class-II pyridine nucleotide-disulfide oxidoreductase family. In terms of assembly, homodimer. The cofactor is FAD.

It is found in the cytoplasm. The catalysed reaction is [thioredoxin]-dithiol + NADP(+) = [thioredoxin]-disulfide + NADPH + H(+). The polypeptide is Thioredoxin reductase (Mycobacterium tuberculosis (strain CDC 1551 / Oshkosh)).